The following is a 303-amino-acid chain: Protoheme IX farnesyltransferase (303 aa).

Helical transmembrane passes span 25–45, 54–74, 118–138, 166–186, 230–250, and 280–300; these read MGLV…AIVM, IPQI…ACAL, CLFL…VGYV, IGWV…FLVV, LVLL…FVVI, and FVYS…VSLI.

This sequence belongs to the UbiA prenyltransferase family. Protoheme IX farnesyltransferase subfamily. As to quaternary structure, interacts with CtaA.

It is found in the cell membrane. It carries out the reaction heme b + (2E,6E)-farnesyl diphosphate + H2O = Fe(II)-heme o + diphosphate. The protein operates within porphyrin-containing compound metabolism; heme O biosynthesis; heme O from protoheme: step 1/1. In terms of biological role, converts heme B (protoheme IX) to heme O by substitution of the vinyl group on carbon 2 of heme B porphyrin ring with a hydroxyethyl farnesyl side group. The chain is Protoheme IX farnesyltransferase from Staphylococcus epidermidis (strain ATCC 12228 / FDA PCI 1200).